Reading from the N-terminus, the 348-residue chain is NADH-ubiquinone oxidoreductase chain 2 (348 aa).

A run of 11 helical transmembrane segments spans residues 1-21 (MNPY…TLTF), 25-45 (HWIL…PLMA), 60-80 (FLIQ…NAWI), 99-119 (MFAL…PEVL), 124-144 (LLTG…LIIQ), 151-171 (PLIL…SGLN), 178-197 (ILAY…IQYA), 202-224 (LIAL…VLSA), 239-259 (ILAA…PLTG), 274-294 (DLPA…FFYL), and 326-346 (LTIS…ILML).

The protein belongs to the complex I subunit 2 family. Core subunit of respiratory chain NADH dehydrogenase (Complex I) which is composed of 45 different subunits.

The protein resides in the mitochondrion inner membrane. The catalysed reaction is a ubiquinone + NADH + 5 H(+)(in) = a ubiquinol + NAD(+) + 4 H(+)(out). Its function is as follows. Core subunit of the mitochondrial membrane respiratory chain NADH dehydrogenase (Complex I) which catalyzes electron transfer from NADH through the respiratory chain, using ubiquinone as an electron acceptor. Essential for the catalytic activity and assembly of complex I. In Danio rerio (Zebrafish), this protein is NADH-ubiquinone oxidoreductase chain 2 (mt-nd2).